Consider the following 477-residue polypeptide: tRNA(Ile)-lysidine synthase (477 aa).

36–41 (SGGADS) is an ATP binding site.

This sequence belongs to the tRNA(Ile)-lysidine synthase family.

Its subcellular location is the cytoplasm. It carries out the reaction cytidine(34) in tRNA(Ile2) + L-lysine + ATP = lysidine(34) in tRNA(Ile2) + AMP + diphosphate + H(+). In terms of biological role, ligates lysine onto the cytidine present at position 34 of the AUA codon-specific tRNA(Ile) that contains the anticodon CAU, in an ATP-dependent manner. Cytidine is converted to lysidine, thus changing the amino acid specificity of the tRNA from methionine to isoleucine. This Treponema pallidum (strain Nichols) protein is tRNA(Ile)-lysidine synthase.